A 569-amino-acid polypeptide reads, in one-letter code: 2-succinyl-5-enolpyruvyl-6-hydroxy-3-cyclohexene-1-carboxylate synthase (569 aa).

The protein belongs to the TPP enzyme family. MenD subfamily. In terms of assembly, homodimer. The cofactor is Mg(2+). It depends on Mn(2+) as a cofactor. Thiamine diphosphate serves as cofactor.

It catalyses the reaction isochorismate + 2-oxoglutarate + H(+) = 5-enolpyruvoyl-6-hydroxy-2-succinyl-cyclohex-3-ene-1-carboxylate + CO2. Its pathway is quinol/quinone metabolism; 1,4-dihydroxy-2-naphthoate biosynthesis; 1,4-dihydroxy-2-naphthoate from chorismate: step 2/7. It functions in the pathway quinol/quinone metabolism; menaquinone biosynthesis. Catalyzes the thiamine diphosphate-dependent decarboxylation of 2-oxoglutarate and the subsequent addition of the resulting succinic semialdehyde-thiamine pyrophosphate anion to isochorismate to yield 2-succinyl-5-enolpyruvyl-6-hydroxy-3-cyclohexene-1-carboxylate (SEPHCHC). This is 2-succinyl-5-enolpyruvyl-6-hydroxy-3-cyclohexene-1-carboxylate synthase from Shewanella halifaxensis (strain HAW-EB4).